A 448-amino-acid chain; its full sequence is Methylenetetrahydrofolate--tRNA-(uracil-5-)-methyltransferase TrmFO (448 aa).

13–18 (GAGLAG) contacts FAD.

Belongs to the MnmG family. TrmFO subfamily. The cofactor is FAD.

Its subcellular location is the cytoplasm. The enzyme catalyses uridine(54) in tRNA + (6R)-5,10-methylene-5,6,7,8-tetrahydrofolate + NADH + H(+) = 5-methyluridine(54) in tRNA + (6S)-5,6,7,8-tetrahydrofolate + NAD(+). It carries out the reaction uridine(54) in tRNA + (6R)-5,10-methylene-5,6,7,8-tetrahydrofolate + NADPH + H(+) = 5-methyluridine(54) in tRNA + (6S)-5,6,7,8-tetrahydrofolate + NADP(+). Functionally, catalyzes the folate-dependent formation of 5-methyl-uridine at position 54 (M-5-U54) in all tRNAs. The polypeptide is Methylenetetrahydrofolate--tRNA-(uracil-5-)-methyltransferase TrmFO (Streptococcus pyogenes serotype M28 (strain MGAS6180)).